The primary structure comprises 71 residues: Brevinin-1V (71 aa).

An N-terminal signal peptide occupies residues 1-22 (MFTLKKSLLLLFFLGTINLSLC). Positions 23 to 45 (EQERDADEEERRDDSEERDIEVE) are excised as a propeptide. A disulfide bridge connects residues cysteine 65 and cysteine 71.

This sequence belongs to the frog skin active peptide (FSAP) family. Brevinin subfamily. As to expression, expressed by the skin glands.

It localises to the secreted. In terms of biological role, has antimicrobial activity against Gram-positive bacteria and fungi but has weak or no activity against a range of Gram-negative bacteria except P.faecalis. Active against the Gram-positive bacteria E.faecium 091299 (MIC=37.5 uM), S.aureus ATCC 25923 (MIC=2.4 uM), S.carnosus KHS (MIC=19 uM), B.licheniformis X39 (MIC=2.4 uM) and R.rhodochrous X15 (MIC=1.2 uM) and a lower activity against E.faecalis 981 (MIC=75 uM). Active against the Gram-negative bacterium P.faecalis X29 (MIC=9.5 uM) is virtually inactive against E.coli ATCC 25922 (MIC=150 uM), and inactive against P.aeruginosa and S.typhi. Has antifungal activity against C.albicans ATCC 2002 (MIC=9.5 uM) and is also active against the slime mold 090223 (MIC=1.2 uM). Has low hemolytic activity against human erythrocytes (LC(50)=75 uM). This chain is Brevinin-1V, found in Odorrana hainanensis (Odor frog).